A 154-amino-acid polypeptide reads, in one-letter code: Decarboxylase claH (154 aa).

The protein belongs to the tpcK family.

It carries out the reaction atrochrysone carboxylate + H(+) = atrochrysone + CO2. The protein operates within pigment biosynthesis. Its function is as follows. Decarboxylase involved in the biosynthesis of the bianthraquinone cladofulvin, a conidial pigment not required for virulence but that plays a role in fitness and resistance to environmental stresses including UV light and low-temperature stress. The pathway begins with the synthesis of atrochrysone thioester by the polyketide synthase (PKS) claG. The atrochrysone carboxyl ACP thioesterase claF then breaks the thioester bond and releases the atrochrysone carboxylic acid from claG. This compound is decarboxylated by claH to yield emodin, which is further converted to chrysophanol hydroquinone by the reductase claC and the dehydratase claB. The cytochrome monooxygenase P450 claM then catalyzes the dimerization of nataloe-emodin to cladofulvin. In Passalora fulva (Tomato leaf mold), this protein is Decarboxylase claH.